Reading from the N-terminus, the 2184-residue chain is Chromodomain-helicase-DNA-binding protein 8 (2184 aa).

Disordered stretches follow at residues 379 to 399 (VKTS…KQEK) and 419 to 527 (IPRV…KRKK). Residues 387–399 (ESRKLDSQKKQEK) are compositionally biased toward basic and acidic residues. Acidic residues predominate over residues 425 to 437 (EDELPSVNPEDDD). Positions 448–459 (GETSDRSKDEKP) are enriched in basic and acidic residues. Residues 516–527 (KRRSNRQVKRKK) are compositionally biased toward basic residues. Chromo domains lie at 586-653 (AIVD…TQMQ) and 668-734 (VEVD…RVAR). The Helicase ATP-binding domain occupies 767-941 (LFNWYNRQNC…FSLLHFLEPT (175 aa)). Position 780-787 (780-787 (DEMGLGKT)) interacts with ATP. The DEAH box signature appears at 892–895 (DEAH). In terms of domain architecture, Helicase C-terminal spans 1081–1252 (LIDKLLPKLR…FTKKEIEDLL (172 aa)). 2 disordered regions span residues 1907–1989 (GISG…EESR) and 2039–2076 (WSSP…PAPD). Low complexity-rich tracts occupy residues 1912–1961 (SRPS…SNSE) and 2040–2054 (SSPR…DSPD).

Belongs to the SNF2/RAD54 helicase family. CHD8 subfamily. In terms of assembly, component of some MLL1/MLL complex.

It localises to the nucleus. The catalysed reaction is ATP + H2O = ADP + phosphate + H(+). Functionally, ATP-dependent chromatin-remodeling factor, it slides nucleosomes along DNA; nucleosome sliding requires ATP. Acts as a transcription repressor by remodeling chromatin structure and recruiting histone H1 to target genes. Suppresses p53/tp53-mediated apoptosis by recruiting histone H1 and preventing p53/tp53 transactivation activity. Acts as a negative regulator of Wnt signaling pathway by regulating beta-catenin (ctnnb1) activity. Negatively regulates ctnnb1-targeted gene expression by being recruited specifically to the promoter regions of several ctnnb1 responsive genes. May also act as a transcription activator by participating in efficient U6 RNA polymerase III transcription. The chain is Chromodomain-helicase-DNA-binding protein 8 from Xenopus tropicalis (Western clawed frog).